Reading from the N-terminus, the 63-residue chain is Conotoxin Gm5.1 (63 aa).

A signal peptide spans 1–21; sequence MRYLPVFVILLLLIASIPSDT. A propeptide spanning residues 22-50 is cleaved from the precursor; it reads VQLKTKDDMPLASFHGNGRRILRMLSNKR.

Belongs to the conotoxin T superfamily. Post-translationally, contains 2 disulfide bonds that can be either 'C1-C3, C2-C4' or 'C1-C4, C2-C3', since these disulfide connectivities have been observed for conotoxins with cysteine framework V (for examples, see AC P0DQQ7 and AC P81755). As to expression, expressed by the venom duct.

It localises to the secreted. This chain is Conotoxin Gm5.1, found in Conus gloriamaris (Glory-of-the-Sea cone).